Here is a 123-residue protein sequence, read N- to C-terminus: Large ribosomal subunit protein eL8 (123 aa).

It belongs to the eukaryotic ribosomal protein eL8 family. May be present in up to 3 copies per 70S ribosome. Part of the 50S ribosomal subunit, where it binds 23S rRNA at its canonical site near the L1 stalk, as well as a possible second 50S binding site near helix 25 and a possible third site on the beak of the 30S subunit. Component of box C/D small ribonucleoprotein (sRNP) particles that contain rpl7ae, FlpA and nop5, plus a guide RNA. These sRNP particles form homodimers, giving rise to an asymmetric holoenzyme. Probably part of the RNase P complex.

It is found in the cytoplasm. Functionally, multifunctional RNA-binding protein that recognizes the K-turn motif in ribosomal RNA, the RNA component of RNase P, box H/ACA, box C/D and box C'/D' sRNAs. Component of the 70S ribosome. Component of a box C/D small ribonucleoprotein (sRNP) particle that is involved in pre-rRNA and tRNA processing. Utilizes the methyl donor S-adenosyl-L-methionine to catalyze the site-specific 2'-hydroxyl methylation of ribose moieties in rRNA and tRNA. Site specificity is provided by a guide RNA that base pairs with the substrate. Methylation occurs at a characteristic distance from the sequence involved in base pairing with the guide RNA. The chain is Large ribosomal subunit protein eL8 from Pyrococcus furiosus (strain ATCC 43587 / DSM 3638 / JCM 8422 / Vc1).